A 468-amino-acid chain; its full sequence is Monocarboxylate transporter 6 (468 aa).

At M1 to A13 the chain is on the cytoplasmic side. The helical transmembrane segment at W14–I34 threads the bilayer. The Extracellular segment spans residues G35 to S53. The helical transmembrane segment at W54–V74 threads the bilayer. The Cytoplasmic portion of the chain corresponds to K75–R80. Residues V81–G101 traverse the membrane as a helical segment. Residue S102 is a topological domain, extracellular. A helical membrane pass occupies residues L103–F122. Residues Q123–P138 lie on the Cytoplasmic side of the membrane. Residues L139–A159 form a helical membrane-spanning segment. The Extracellular segment spans residues R160 to A171. A helical membrane pass occupies residues F172–V192. The Cytoplasmic segment spans residues A193–C239. A helical membrane pass occupies residues I240 to V260. Residues P261–A274 are Extracellular-facing. Residues M275–L295 traverse the membrane as a helical segment. At A296–K306 the chain is on the cytoplasmic side. A helical transmembrane segment spans residues Y307 to A327. The Extracellular portion of the chain corresponds to D328–R330. A helical membrane pass occupies residues V331–F351. The Cytoplasmic segment spans residues Q352 to G368. Residues L369–L389 form a helical membrane-spanning segment. At D390–S396 the chain is on the extracellular side. The chain crosses the membrane as a helical span at residues Y397–F417. Residues Y418–V468 lie on the Cytoplasmic side of the membrane. The tract at residues G429–V468 is disordered. Residues L446–K455 show a composition bias toward basic and acidic residues.

This sequence belongs to the major facilitator superfamily. Monocarboxylate porter (TC 2.A.1.13) family.

It localises to the cell membrane. In terms of biological role, proton-linked monocarboxylate transporter. Catalyzes the rapid transport across the plasma membrane of many monocarboxylates such as lactate, pyruvate, branched-chain oxo acids derived from leucine, valine and isoleucine, and the ketone bodies acetoacetate, beta-hydroxybutyrate and acetate. The protein is Monocarboxylate transporter 6 (Slc16a5) of Mus musculus (Mouse).